A 364-amino-acid chain; its full sequence is Dual-specificity RNA methyltransferase RlmN (364 aa).

Glu91 acts as the Proton acceptor in catalysis. Residues 97–333 (ESDRGTLCIS…VTVRKTRGDD (237 aa)) form the Radical SAM core domain. An intrachain disulfide couples Cys104 to Cys338. The [4Fe-4S] cluster site is built by Cys111, Cys115, and Cys118. Residues 164-165 (GE), Ser196, 218-220 (SLH), and Asn295 each bind S-adenosyl-L-methionine. Residue Cys338 is the S-methylcysteine intermediate of the active site.

Belongs to the radical SAM superfamily. RlmN family. Requires [4Fe-4S] cluster as cofactor.

The protein localises to the cytoplasm. The enzyme catalyses adenosine(2503) in 23S rRNA + 2 reduced [2Fe-2S]-[ferredoxin] + 2 S-adenosyl-L-methionine = 2-methyladenosine(2503) in 23S rRNA + 5'-deoxyadenosine + L-methionine + 2 oxidized [2Fe-2S]-[ferredoxin] + S-adenosyl-L-homocysteine. It catalyses the reaction adenosine(37) in tRNA + 2 reduced [2Fe-2S]-[ferredoxin] + 2 S-adenosyl-L-methionine = 2-methyladenosine(37) in tRNA + 5'-deoxyadenosine + L-methionine + 2 oxidized [2Fe-2S]-[ferredoxin] + S-adenosyl-L-homocysteine. In terms of biological role, specifically methylates position 2 of adenine 2503 in 23S rRNA and position 2 of adenine 37 in tRNAs. m2A2503 modification seems to play a crucial role in the proofreading step occurring at the peptidyl transferase center and thus would serve to optimize ribosomal fidelity. This is Dual-specificity RNA methyltransferase RlmN from Neisseria meningitidis serogroup B (strain ATCC BAA-335 / MC58).